The chain runs to 360 residues: Phospho-N-acetylmuramoyl-pentapeptide-transferase (360 aa).

Helical transmembrane passes span 27-47 (IVSL…MIAF), 71-91 (TPTM…LLWV), 94-114 (NNPY…VGFV), 132-152 (WKYF…YSFG), 168-188 (VMPQ…VGTS), 199-219 (GLAI…AWAT), 236-256 (AGEL…FLWF), 263-283 (VFMG…IAVL), 288-308 (FLLV…ILQV), and 338-358 (VIVR…ATLK).

The protein belongs to the glycosyltransferase 4 family. MraY subfamily. Mg(2+) is required as a cofactor.

Its subcellular location is the cell inner membrane. The catalysed reaction is UDP-N-acetyl-alpha-D-muramoyl-L-alanyl-gamma-D-glutamyl-meso-2,6-diaminopimeloyl-D-alanyl-D-alanine + di-trans,octa-cis-undecaprenyl phosphate = di-trans,octa-cis-undecaprenyl diphospho-N-acetyl-alpha-D-muramoyl-L-alanyl-D-glutamyl-meso-2,6-diaminopimeloyl-D-alanyl-D-alanine + UMP. It functions in the pathway cell wall biogenesis; peptidoglycan biosynthesis. In terms of biological role, catalyzes the initial step of the lipid cycle reactions in the biosynthesis of the cell wall peptidoglycan: transfers peptidoglycan precursor phospho-MurNAc-pentapeptide from UDP-MurNAc-pentapeptide onto the lipid carrier undecaprenyl phosphate, yielding undecaprenyl-pyrophosphoryl-MurNAc-pentapeptide, known as lipid I. This is Phospho-N-acetylmuramoyl-pentapeptide-transferase from Photorhabdus laumondii subsp. laumondii (strain DSM 15139 / CIP 105565 / TT01) (Photorhabdus luminescens subsp. laumondii).